The sequence spans 692 residues: MSRALLRGAACQGCRHEVLRSFVSVSGIPMPRSSPLSSRSISNSRAFSAVTVLRSDRPPSSNQIDRHLSESQEPPAHSEANTPASSQHVPWYLQEEAPIVKDRPLTEAHLPQIPDDSPEMLSTLLEYTYKDLGLDHLKLFDLRGLEIPAALGANVIMIIGTARSVKHLNVSADRLCRWLRSQYKLSPYADGLLGRNELKIKLRRKAKRARAASAAGAMVDEKDDGITTGWICVNAGMVDKGATTTQLSDVGIEGFGNLDLGTSVVVQIFTEEKRADVDLDGLWEATLAREGRKDIRESTEDLSKTGAGPPRSTSDGFGSIPGQKRGFHTMRRLALSAMNSAEPGLEAGFPGVGASSSALPGDAAEVASQLTPTSLLQILAELPADSARNELGSGPNDRQSTLFLRLFYTNHAARFSAQEKAIFRLKLFSIAVSRQHPAYTKDTLFSTFSDFLRDGYDLPDDLGFDVVSALLTPRTAGVVTEQSETHSSEADMELALLVLDRLSLRGVPILNMRIFNILYQAVCAPKTAPSKPTESRPEEGSPSWSVVQQTESQKQTLSRLSKILAAANIPFDAVDARQLMVTLFQCGDYDGFWRLWRQFPLKGVNRTQEDYVQLFKLHAELGEEVRARECLSTGVPLMNQESPAIVLQGPIVTAIMHCILVADPTLQDRDEESPSFYMPLWTECQEALAREN.

The transit peptide at 1–48 directs the protein to the mitochondrion; the sequence is MSRALLRGAACQGCRHEVLRSFVSVSGIPMPRSSPLSSRSISNSRAFS. Disordered regions lie at residues 52 to 86, 293 to 322, and 528 to 548; these read VLRS…PASS, KDIR…SIPG, and APSK…SVVQ. The segment covering 293–303 has biased composition (basic and acidic residues); the sequence is KDIRESTEDLS.

The protein belongs to the ATP25 family.

It localises to the mitochondrion inner membrane. Functionally, probable mitochondrial mRNA stabilization factor. The polypeptide is ATPase synthesis protein 25, mitochondrial (atp25) (Penicillium rubens (strain ATCC 28089 / DSM 1075 / NRRL 1951 / Wisconsin 54-1255) (Penicillium chrysogenum)).